The following is a 436-amino-acid chain: 3-ketoacyl-CoA thiolase (436 aa).

Catalysis depends on Cys99, which acts as the Acyl-thioester intermediate. Active-site proton acceptor residues include His392 and Cys422.

This sequence belongs to the thiolase-like superfamily. Thiolase family. In terms of assembly, heterotetramer of two alpha chains (FadJ) and two beta chains (FadI).

The protein localises to the cytoplasm. It catalyses the reaction an acyl-CoA + acetyl-CoA = a 3-oxoacyl-CoA + CoA. It functions in the pathway lipid metabolism; fatty acid beta-oxidation. Its function is as follows. Catalyzes the final step of fatty acid oxidation in which acetyl-CoA is released and the CoA ester of a fatty acid two carbons shorter is formed. This is 3-ketoacyl-CoA thiolase from Salmonella typhi.